Consider the following 173-residue polypeptide: NADH-ubiquinone oxidoreductase chain 6 (173 aa).

5 helical membrane passes run 1-21 (MTYF…AVAS), 27-47 (YGVV…LSLG), 48-68 (VSFV…VVFV), 91-111 (GVGF…IGCL), and 141-161 (VGMF…VLEL).

This sequence belongs to the complex I subunit 6 family.

Its subcellular location is the mitochondrion membrane. It catalyses the reaction a ubiquinone + NADH + 5 H(+)(in) = a ubiquinol + NAD(+) + 4 H(+)(out). Its function is as follows. Core subunit of the mitochondrial membrane respiratory chain NADH dehydrogenase (Complex I) that is believed to belong to the minimal assembly required for catalysis. Complex I functions in the transfer of electrons from NADH to the respiratory chain. The immediate electron acceptor for the enzyme is believed to be ubiquinone. The protein is NADH-ubiquinone oxidoreductase chain 6 (MT-ND6) of Fratercula arctica (Atlantic puffin).